The sequence spans 388 residues: Dual-specificity RNA methyltransferase RlmN (388 aa).

Glu-109 acts as the Proton acceptor in catalysis. The Radical SAM core domain maps to 115 to 354; the sequence is EEDRATLCVS…TIVRKTRGDD (240 aa). An intrachain disulfide couples Cys-122 to Cys-359. [4Fe-4S] cluster-binding residues include Cys-129, Cys-133, and Cys-136. S-adenosyl-L-methionine contacts are provided by residues 183-184, Ser-215, 237-239, and Asn-316; these read GE and SLH. Cys-359 functions as the S-methylcysteine intermediate in the catalytic mechanism.

Belongs to the radical SAM superfamily. RlmN family. The cofactor is [4Fe-4S] cluster.

It is found in the cytoplasm. The enzyme catalyses adenosine(2503) in 23S rRNA + 2 reduced [2Fe-2S]-[ferredoxin] + 2 S-adenosyl-L-methionine = 2-methyladenosine(2503) in 23S rRNA + 5'-deoxyadenosine + L-methionine + 2 oxidized [2Fe-2S]-[ferredoxin] + S-adenosyl-L-homocysteine. The catalysed reaction is adenosine(37) in tRNA + 2 reduced [2Fe-2S]-[ferredoxin] + 2 S-adenosyl-L-methionine = 2-methyladenosine(37) in tRNA + 5'-deoxyadenosine + L-methionine + 2 oxidized [2Fe-2S]-[ferredoxin] + S-adenosyl-L-homocysteine. In terms of biological role, specifically methylates position 2 of adenine 2503 in 23S rRNA and position 2 of adenine 37 in tRNAs. m2A2503 modification seems to play a crucial role in the proofreading step occurring at the peptidyl transferase center and thus would serve to optimize ribosomal fidelity. This is Dual-specificity RNA methyltransferase RlmN from Enterobacter sp. (strain 638).